The chain runs to 449 residues: Glucose-6-phosphate isomerase (449 aa).

Glutamate 290 serves as the catalytic Proton donor. Residues histidine 311 and lysine 425 contribute to the active site.

Belongs to the GPI family.

It localises to the cytoplasm. The catalysed reaction is alpha-D-glucose 6-phosphate = beta-D-fructose 6-phosphate. It participates in carbohydrate biosynthesis; gluconeogenesis. It functions in the pathway carbohydrate degradation; glycolysis; D-glyceraldehyde 3-phosphate and glycerone phosphate from D-glucose: step 2/4. Catalyzes the reversible isomerization of glucose-6-phosphate to fructose-6-phosphate. The chain is Glucose-6-phosphate isomerase from Clostridium tetani (strain Massachusetts / E88).